Consider the following 139-residue polypeptide: D-ribose pyranase (139 aa).

H20 acts as the Proton donor in catalysis. Residues D28, H106, and 128-130 (FAN) contribute to the substrate site.

This sequence belongs to the RbsD / FucU family. RbsD subfamily. As to quaternary structure, homodecamer.

Its subcellular location is the cytoplasm. It carries out the reaction beta-D-ribopyranose = beta-D-ribofuranose. The protein operates within carbohydrate metabolism; D-ribose degradation; D-ribose 5-phosphate from beta-D-ribopyranose: step 1/2. In terms of biological role, catalyzes the interconversion of beta-pyran and beta-furan forms of D-ribose. This Yersinia enterocolitica serotype O:8 / biotype 1B (strain NCTC 13174 / 8081) protein is D-ribose pyranase.